We begin with the raw amino-acid sequence, 174 residues long: Endoribonuclease YbeY (174 aa).

Zn(2+) is bound by residues histidine 133, histidine 137, and histidine 143.

The protein belongs to the endoribonuclease YbeY family. It depends on Zn(2+) as a cofactor.

It localises to the cytoplasm. Its function is as follows. Single strand-specific metallo-endoribonuclease involved in late-stage 70S ribosome quality control and in maturation of the 3' terminus of the 16S rRNA. The protein is Endoribonuclease YbeY of Paracoccus denitrificans (strain Pd 1222).